The following is a 429-amino-acid chain: Serine--tRNA ligase (429 aa).

236-238 (TAE) serves as a coordination point for L-serine. 267–269 (RSE) is a binding site for ATP. An L-serine-binding site is contributed by Glu290. An ATP-binding site is contributed by 354 to 357 (EISS). Ser390 contacts L-serine.

This sequence belongs to the class-II aminoacyl-tRNA synthetase family. Type-1 seryl-tRNA synthetase subfamily. As to quaternary structure, homodimer. The tRNA molecule binds across the dimer.

It localises to the cytoplasm. It catalyses the reaction tRNA(Ser) + L-serine + ATP = L-seryl-tRNA(Ser) + AMP + diphosphate + H(+). It carries out the reaction tRNA(Sec) + L-serine + ATP = L-seryl-tRNA(Sec) + AMP + diphosphate + H(+). It participates in aminoacyl-tRNA biosynthesis; selenocysteinyl-tRNA(Sec) biosynthesis; L-seryl-tRNA(Sec) from L-serine and tRNA(Sec): step 1/1. Its function is as follows. Catalyzes the attachment of serine to tRNA(Ser). Is also able to aminoacylate tRNA(Sec) with serine, to form the misacylated tRNA L-seryl-tRNA(Sec), which will be further converted into selenocysteinyl-tRNA(Sec). The protein is Serine--tRNA ligase of Photorhabdus laumondii subsp. laumondii (strain DSM 15139 / CIP 105565 / TT01) (Photorhabdus luminescens subsp. laumondii).